A 265-amino-acid chain; its full sequence is Hydroxyethylthiazole kinase (265 aa).

Met43 serves as a coordination point for substrate. Arg119 and Ser165 together coordinate ATP. Ala192 contacts substrate.

This sequence belongs to the Thz kinase family. Mg(2+) serves as cofactor.

It catalyses the reaction 5-(2-hydroxyethyl)-4-methylthiazole + ATP = 4-methyl-5-(2-phosphooxyethyl)-thiazole + ADP + H(+). It participates in cofactor biosynthesis; thiamine diphosphate biosynthesis; 4-methyl-5-(2-phosphoethyl)-thiazole from 5-(2-hydroxyethyl)-4-methylthiazole: step 1/1. Its function is as follows. Catalyzes the phosphorylation of the hydroxyl group of 4-methyl-5-beta-hydroxyethylthiazole (THZ). This is Hydroxyethylthiazole kinase from Haemophilus influenzae (strain 86-028NP).